We begin with the raw amino-acid sequence, 436 residues long: bZIP transcription factor RISBZ1 (436 aa).

The tract at residues 1–27 is required for transactivation activity; that stretch reads MEHVFAVDEIPDPLWAPPPPVQPAAAA. The disordered stretch occupies residues 182-258; the sequence is LSPGPNGGSG…SARRSRSRKA (77 aa). A compositionally biased stretch (acidic residues) spans 215–225; that stretch reads PSEDDDMEGDA. Residues 236 to 299 form the bZIP domain; it reads EDKVKKRKES…SAAAIDNRVL (64 aa). The tract at residues 238–257 is basic motif; sequence KVKKRKESNRESARRSRSRK. Residues 264–278 form a leucine-zipper region; the sequence is LEEQVSLLRVENSSL.

As to quaternary structure, homodimer. Forms heterodimers with RISBZ2/BZP33 and RISBZ3/BZP20. Interacts with DOF3/RPBF. In terms of tissue distribution, specifically expressed in seeds. Expressed in aleurone and subaleurone layers of maturing seeds, but not in the embryo tissues.

The protein resides in the nucleus. Its function is as follows. Transcriptional activator that binds to the DNA specific sequence 5'-TGAGTCA-3' found in seed storage protein gene promoters. Involved in the endosperm-specific regulation of storage protein genes. Can activate the expression of genes encoding for the seed storage proteins glutelin, prolamin, globulin and the allergen RAG1. Functions synergistically with DOF3/RPBF to positively regulate quantitatively many seed storage protein genes. Functions synergistically with DOF3/RPBF to positively regulate some metabolic enzymes, such as alanine aminotransferase and pyruvate phosphate dikinase, that are expressed in developing seeds. Functions synergistically with DOF3/RPBF to positively regulate genes that are key players in the development of aleurone layers. Functions synergistically with DOF3/RPBF to positively regulate the glutelin GLUD-1 gene in endosperm of developing seeds. Can activate the expression of the bifunctional lysine-degrading enzyme, lysine ketoglutarate reductase/saccharopine dehydrogenase (LKR/SDH), one of the key regulators determining free lysine content in plants. Functions as a key regulator of starch synthesis in seeds, by direct binding to the promoters of starch-synthesizing genes, such as AGPL3, WAXXY and SBE1. This is bZIP transcription factor RISBZ1 from Oryza sativa subsp. japonica (Rice).